Reading from the N-terminus, the 147-residue chain is MATLLVLHGPNLNLLGTREPGVYGAVTLAQINQDLEQRARAAGHHLLHLQSNAEYELIERIHAARSEGVDFILINPAAFTHTSVALRDALLAVSIPFIEVHLSNVHKREPFRHHSYFSDVAVGVICGLGASGYRLALEAALEQLAAS.

Residue Tyr23 is the Proton acceptor of the active site. Residues Asn75, His81, and Asp88 each coordinate substrate. Catalysis depends on His101, which acts as the Proton donor. Substrate-binding positions include Leu102–Ser103 and Arg112.

It belongs to the type-II 3-dehydroquinase family. As to quaternary structure, homododecamer.

It catalyses the reaction 3-dehydroquinate = 3-dehydroshikimate + H2O. It functions in the pathway metabolic intermediate biosynthesis; chorismate biosynthesis; chorismate from D-erythrose 4-phosphate and phosphoenolpyruvate: step 3/7. Catalyzes a trans-dehydration via an enolate intermediate. The protein is 3-dehydroquinate dehydratase of Stutzerimonas stutzeri (strain A1501) (Pseudomonas stutzeri).